The sequence spans 399 residues: 3-sulfinopropanoyl-CoA desulfinase (399 aa).

FAD contacts are provided by residues 121-124 (ICIS), S130, and 153-156 (YWIT). 244–245 (YN) provides a ligand contact to substrate. FAD-binding positions include R273, Q340, S344, 367–371 (GGTAQ), and Q388.

The protein belongs to the acyl-CoA dehydrogenase family. As to quaternary structure, homotrimer or homotetramer. The cofactor is FAD.

It catalyses the reaction 3-sulfinopropanoyl-CoA + H2O = propanoyl-CoA + sulfite + H(+). Functionally, catalyzes the conversion 3-sulfinopropanoyl-CoA (3SP-CoA) to propanoyl-CoA by abstraction of sulfite. Does not show dehydrogenase activity. This is 3-sulfinopropanoyl-CoA desulfinase from Variovorax paradoxus.